A 381-amino-acid chain; its full sequence is Cytosolic acyl coenzyme A thioester hydrolase (381 aa).

The 119-residue stretch at 51 to 169 (PGHCIAMGRI…TLWYVPLSLK (119 aa)) folds into the HotDog ACOT-type 1 domain. Asn-67 is a catalytic residue. An N6-acetyllysine mark is found at Lys-169 and Lys-199. The HotDog ACOT-type 2 domain maps to 225–339 (SYSQSSLIHL…FFTYVSLNQE (115 aa)). Residue Asp-256 is part of the active site. Residue Lys-284 is modified to N6-acetyllysine. Residues 343 to 381 (LPVPQLVPETEDEKKRFEEGKGRYLQMKAKRQGHTEPQP) form a disordered region. The segment covering 354–364 (DEKKRFEEGKG) has biased composition (basic and acidic residues).

As to quaternary structure, homohexamer. The N-terminus is blocked. As to expression, isoform 1 is expressed constitutively in brain and testis. Isoform 2 is induced in liver by treatment with the peroxisome proliferator.

Its subcellular location is the cytoplasm. The protein localises to the cytosol. It carries out the reaction hexadecanoyl-CoA + H2O = hexadecanoate + CoA + H(+). It catalyses the reaction dodecanoyl-CoA + H2O = dodecanoate + CoA + H(+). The catalysed reaction is tetradecanoyl-CoA + H2O = tetradecanoate + CoA + H(+). The enzyme catalyses decanoyl-CoA + H2O = decanoate + CoA + H(+). It carries out the reaction octanoyl-CoA + H2O = octanoate + CoA + H(+). It catalyses the reaction octadecanoyl-CoA + H2O = octadecanoate + CoA + H(+). The catalysed reaction is (9Z)-octadecenoyl-CoA + H2O = (9Z)-octadecenoate + CoA + H(+). It participates in lipid metabolism; fatty acid metabolism. Catalyzes the hydrolysis of acyl-CoAs into free fatty acids and coenzyme A (CoASH), regulating their respective intracellular levels. Preferentially hydrolyzes palmitoyl-CoA, but has a broad specificity acting on other fatty acyl-CoAs with chain-lengths of C8-C18. May play an important physiological function in brain. The protein is Cytosolic acyl coenzyme A thioester hydrolase (Acot7) of Rattus norvegicus (Rat).